Here is a 148-residue protein sequence, read N- to C-terminus: Small ribosomal subunit protein uS9 (148 aa).

This sequence belongs to the universal ribosomal protein uS9 family.

The polypeptide is Small ribosomal subunit protein uS9 (RpS16) (Aedes aegypti (Yellowfever mosquito)).